A 336-amino-acid polypeptide reads, in one-letter code: HTH-type transcriptional regulator AscG (336 aa).

An HTH lacI-type domain is found at 2-56 (TTMLEVAKRAGVSKATVSRVLSGNGYVSQETKDRVFQAVEESGYRPNLLARNLSA). A DNA-binding region (H-T-H motif) is located at residues 4–23 (MLEVAKRAGVSKATVSRVLS).

Its function is as follows. Repressor of the asc operon. The cryptic operon is activated by the insertion of IS186 into the ascG gene. In Escherichia coli (strain K12), this protein is HTH-type transcriptional regulator AscG (ascG).